The chain runs to 205 residues: Large ribosomal subunit protein bL25 (205 aa).

It belongs to the bacterial ribosomal protein bL25 family. CTC subfamily. Part of the 50S ribosomal subunit; part of the 5S rRNA/L5/L18/L25 subcomplex. Contacts the 5S rRNA. Binds to the 5S rRNA independently of L5 and L18.

Its function is as follows. This is one of the proteins that binds to the 5S RNA in the ribosome where it forms part of the central protuberance. The chain is Large ribosomal subunit protein bL25 from Stutzerimonas stutzeri (strain A1501) (Pseudomonas stutzeri).